The primary structure comprises 232 residues: Chaperone protein CssC (232 aa).

An N-terminal signal peptide occupies residues 1-20 (MKSKLIILLMLVPFSSFSTE).

The protein belongs to the periplasmic pilus chaperone family.

It is found in the periplasm. In terms of biological role, involved in the biogenesis of the CS6 fimbria. The protein is Chaperone protein CssC (cssC) of Escherichia coli.